A 319-amino-acid polypeptide reads, in one-letter code: Thioredoxin reductase (319 aa).

36–43 (TGINKGGQ) provides a ligand contact to FAD. A disulfide bridge connects residues C136 and C139. 288–297 (DVIDHVYRQA) provides a ligand contact to FAD.

Belongs to the class-II pyridine nucleotide-disulfide oxidoreductase family. As to quaternary structure, homodimer. FAD is required as a cofactor.

It is found in the cytoplasm. It catalyses the reaction [thioredoxin]-dithiol + NADP(+) = [thioredoxin]-disulfide + NADPH + H(+). The chain is Thioredoxin reductase (trxB) from Buchnera aphidicola subsp. Schizaphis graminum (strain Sg).